Here is a 316-residue protein sequence, read N- to C-terminus: AAAGDVILEDVPGSVNLFNTLQDQITKVTAHVQDLTQKVRSSIYNTDKGLSFLELKDQLLLFYLQDLTHLMLEKTNGKSIKGNPGILRLVELRTVLEKMRPIDQKLKYQIDKLVKAAVTGSLGENDPLRFKPNPQNLMSKLSEPDERESDSGEEGAEGGVAKKPQSKVKRYIPPRLAPVHYDDTEAEREHRIVERAKKLALSSSTIRELKEQYSDAPEEIREGRAYHMMRHDKEEQHRINHEESMMVRLNMTRKEKARKKRVLSMTSQLNSLTHFSDISALTGGEGRAEDMVPFMKKSKKGPKKSKKKKGFSRRRH.

Disordered stretches follow at residues 124–169 and 292–316; these read ENDP…SKVK and VPFM…RRRH. The segment covering 145 to 156 has biased composition (acidic residues); sequence DERESDSGEEGA. A compositionally biased stretch (basic residues) spans 296 to 316; the sequence is KKSKKGPKKSKKKKGFSRRRH.

This sequence belongs to the SAS10 family. In terms of assembly, part of the small subunit (SSU) processome, composed of more than 70 proteins and the RNA chaperone small nucleolar RNA (snoRNA) U3.

It localises to the nucleus. The protein resides in the nucleolus. Its subcellular location is the chromosome. It is found in the centromere. The protein localises to the cytoplasm. It localises to the cell projection. The protein resides in the axon. Its subcellular location is the dendrite. It is found in the filopodium. In terms of biological role, part of the small subunit (SSU) processome, first precursor of the small eukaryotic ribosomal subunit. During the assembly of the SSU processome in the nucleolus, many ribosome biogenesis factors, an RNA chaperone and ribosomal proteins associate with the nascent pre-rRNA and work in concert to generate RNA folding, modifications, rearrangements and cleavage as well as targeted degradation of pre-ribosomal RNA by the RNA exosome. Its dissociation from the complex determines the transition from state pre-A1 to state pre-A1*. May inhibit mRNA translation. In Xenopus laevis (African clawed frog), this protein is Neuroguidin-B (ngdn-b).